We begin with the raw amino-acid sequence, 1377 residues long: DNA-directed RNA polymerase subunit beta' (1377 aa).

Zn(2+) is bound by residues C60, C62, C75, and C78. D449, D451, and D453 together coordinate Mg(2+). C777, C851, C858, and C861 together coordinate Zn(2+).

Belongs to the RNA polymerase beta' chain family. As to quaternary structure, the RNAP catalytic core consists of 2 alpha, 1 beta, 1 beta' and 1 omega subunit. When a sigma factor is associated with the core the holoenzyme is formed, which can initiate transcription. Mg(2+) serves as cofactor. It depends on Zn(2+) as a cofactor.

The enzyme catalyses RNA(n) + a ribonucleoside 5'-triphosphate = RNA(n+1) + diphosphate. Its function is as follows. DNA-dependent RNA polymerase catalyzes the transcription of DNA into RNA using the four ribonucleoside triphosphates as substrates. The chain is DNA-directed RNA polymerase subunit beta' from Borrelia turicatae (strain 91E135).